The chain runs to 683 residues: Methionine--tRNA ligase (683 aa).

Positions 15–25 (PYANGPIHLGH) match the 'HIGH' region motif. Residues Cys-146, Cys-149, Cys-159, and Cys-162 each contribute to the Zn(2+) site. Positions 332-336 (KMSKS) match the 'KMSKS' region motif. Lys-335 is an ATP binding site. The region spanning 581–683 (DFFKVDLRVA…AGAKAGQRVK (103 aa)) is the tRNA-binding domain.

It belongs to the class-I aminoacyl-tRNA synthetase family. MetG type 1 subfamily. Homodimer. It depends on Zn(2+) as a cofactor.

It localises to the cytoplasm. The enzyme catalyses tRNA(Met) + L-methionine + ATP = L-methionyl-tRNA(Met) + AMP + diphosphate. Its function is as follows. Is required not only for elongation of protein synthesis but also for the initiation of all mRNA translation through initiator tRNA(fMet) aminoacylation. This is Methionine--tRNA ligase from Histophilus somni (strain 129Pt) (Haemophilus somnus).